The sequence spans 328 residues: Methionyl-tRNA formyltransferase (328 aa).

Ser-110–Pro-113 serves as a coordination point for (6S)-5,6,7,8-tetrahydrofolate.

The protein belongs to the Fmt family.

It catalyses the reaction L-methionyl-tRNA(fMet) + (6R)-10-formyltetrahydrofolate = N-formyl-L-methionyl-tRNA(fMet) + (6S)-5,6,7,8-tetrahydrofolate + H(+). Its function is as follows. Attaches a formyl group to the free amino group of methionyl-tRNA(fMet). The formyl group appears to play a dual role in the initiator identity of N-formylmethionyl-tRNA by promoting its recognition by IF2 and preventing the misappropriation of this tRNA by the elongation apparatus. This Prochlorococcus marinus (strain MIT 9215) protein is Methionyl-tRNA formyltransferase.